The primary structure comprises 336 residues: Protein-arginine N-acetylglucosaminyltransferase SseK1 (336 aa).

A glycan (N-beta-linked (GlcNAc) arginine; by autocatalysis) is linked at Arg24. Residues 50–52 (QWF) and Tyr74 contribute to the UDP-N-acetyl-alpha-D-glucosamine site. Arg152 carries an N-beta-linked (GlcNAc) arginine; by autocatalysis glycan. The DXD motif motif lies at 223–225 (DAD). 224–225 (AD) is a binding site for UDP-N-acetyl-alpha-D-glucosamine. A Mn(2+)-binding site is contributed by Asp225. The Proton acceptor role is filled by Glu255. Mn(2+)-binding residues include Asn322 and Ser324. The UDP-N-acetyl-alpha-D-glucosamine site is built by Ser324 and Ser329. Arg333 carries an N-beta-linked (GlcNAc) arginine; by autocatalysis glycan.

It belongs to the glycosyltransferase NleB family. Mn(2+) is required as a cofactor. Auto-glycosylated: arginine GlcNAcylation is required for activity toward death domain-containing host target proteins.

The protein localises to the secreted. It localises to the host cytoplasm. It is found in the host cytosol. It carries out the reaction L-arginyl-[protein] + UDP-N-acetyl-alpha-D-glucosamine = N(omega)-(N-acetyl-beta-D-glucosaminyl)-L-arginyl-[protein] + UDP + H(+). Its activity is regulated as follows. Protein-arginine N-acetylglucosaminyltransferase activity is inhibited by 100066N compound (flavone analog) and 102644N compound (a substituted isoxazole). Its function is as follows. Protein-arginine N-acetylglucosaminyltransferase effector that disrupts TNF signaling in infected cells, including NF-kappa-B signaling, apoptosis and necroptosis. Acts by catalyzing the transfer of a single N-acetylglucosamine (GlcNAc) to a conserved arginine residue in the death domain of host proteins TRADD and, to a lower extent, FADD: arginine GlcNAcylation prevents homotypic/heterotypic death domain interactions and assembly of the oligomeric TNF-alpha receptor complex, thereby disrupting TNF signaling. Also acts on host proteins without a death domain: catalyzes arginine GlcNAcylation of host GAPDH protein, thereby preventing GAPDH interaction with TRAF2, leading to inhibit NF-kappa-B signaling. Catalyzes GlcNAcylation of host tubulin-folding cofactor TBCB, thereby promoting microtubule stability. Also mediates auto-GlcNAcylation, which is required for activity toward death domain-containing host target proteins. The polypeptide is Protein-arginine N-acetylglucosaminyltransferase SseK1 (Salmonella enteritidis (strain 2009K0958)).